A 160-amino-acid chain; its full sequence is Major pollen allergen Bet v 1-J (160 aa).

Residues Lys55, Tyr82, Tyr84, and Asn101 each coordinate brassinolide. Hydrophobic ligand pocket regions lie at residues 116-118 and 133-141; these read KIN and QIKASKEMG.

This sequence belongs to the BetVI family. As to expression, pollen.

It localises to the cytoplasm. Its function is as follows. May be a general steroid carrier protein. This chain is Major pollen allergen Bet v 1-J, found in Betula pendula (European white birch).